The sequence spans 294 residues: Cytidine deaminase (294 aa).

CMP/dCMP-type deaminase domains lie at 48–168 (DEDA…FGPK) and 186–294 (LTGD…VLLG). Residue 89-91 (NME) participates in substrate binding. H102 is a Zn(2+) binding site. E104 serves as the catalytic Proton donor. Zn(2+) is bound by residues C129 and C132.

Belongs to the cytidine and deoxycytidylate deaminase family. As to quaternary structure, homodimer. It depends on Zn(2+) as a cofactor.

It catalyses the reaction cytidine + H2O + H(+) = uridine + NH4(+). The catalysed reaction is 2'-deoxycytidine + H2O + H(+) = 2'-deoxyuridine + NH4(+). Functionally, this enzyme scavenges exogenous and endogenous cytidine and 2'-deoxycytidine for UMP synthesis. This chain is Cytidine deaminase, found in Salmonella agona (strain SL483).